Consider the following 882-residue polypeptide: Alanine--tRNA ligase (882 aa).

The Zn(2+) site is built by His-570, His-574, Cys-672, and His-676.

It belongs to the class-II aminoacyl-tRNA synthetase family. It depends on Zn(2+) as a cofactor.

Its subcellular location is the cytoplasm. The catalysed reaction is tRNA(Ala) + L-alanine + ATP = L-alanyl-tRNA(Ala) + AMP + diphosphate. In terms of biological role, catalyzes the attachment of alanine to tRNA(Ala) in a two-step reaction: alanine is first activated by ATP to form Ala-AMP and then transferred to the acceptor end of tRNA(Ala). Also edits incorrectly charged Ser-tRNA(Ala) and Gly-tRNA(Ala) via its editing domain. The chain is Alanine--tRNA ligase from Xanthomonas campestris pv. campestris (strain 8004).